We begin with the raw amino-acid sequence, 273 residues long: NAD(P)H-hydrate epimerase (273 aa).

The YjeF N-terminal domain occupies 52–260 (AQQIDQELFN…GIIQKYELNL (209 aa)). 105-109 (NNGGD) lines the (6S)-NADPHX pocket. Residues Asn106 and Asp170 each coordinate K(+). (6S)-NADPHX-binding positions include 174–180 (GFSFKGE) and Asp203. Ser206 serves as a coordination point for K(+).

This sequence belongs to the NnrE/AIBP family. The cofactor is K(+).

The catalysed reaction is (6R)-NADHX = (6S)-NADHX. It catalyses the reaction (6R)-NADPHX = (6S)-NADPHX. Its function is as follows. Catalyzes the epimerization of the S- and R-forms of NAD(P)HX, a damaged form of NAD(P)H that is a result of enzymatic or heat-dependent hydration. This is a prerequisite for the S-specific NAD(P)H-hydrate dehydratase to allow the repair of both epimers of NAD(P)HX. The protein is NAD(P)H-hydrate epimerase of Branchiostoma floridae (Florida lancelet).